The chain runs to 252 residues: Ribosomal RNA small subunit methyltransferase J (252 aa).

S-adenosyl-L-methionine contacts are provided by residues 105–106 (RD), 121–122 (ER), and aspartate 175.

It belongs to the methyltransferase superfamily. RsmJ family.

It localises to the cytoplasm. It catalyses the reaction guanosine(1516) in 16S rRNA + S-adenosyl-L-methionine = N(2)-methylguanosine(1516) in 16S rRNA + S-adenosyl-L-homocysteine + H(+). Specifically methylates the guanosine in position 1516 of 16S rRNA. This chain is Ribosomal RNA small subunit methyltransferase J, found in Pasteurella multocida (strain Pm70).